A 111-amino-acid chain; its full sequence is Cytochrome c oxidase subunit 7A2-like, mitochondrial (111 aa).

The transit peptide at 1–54 (MYYKFSSFTQKLAGAWASEAYTPQGLKPVSTEAPPIIFATPTKLTSSVTAYDYS) directs the protein to the mitochondrion. An N6-acetyllysine modification is found at Lys68. The chain crosses the membrane as a helical span at residues 79-104 (PDQMLYRTTMALTLGGTIYCLIALYM).

It belongs to the cytochrome c oxidase VIIa family.

It localises to the mitochondrion inner membrane. Functionally, non-functional protein. In contrast to the protein found in other strains (AC Q99KD6), cannot induce the assembly of mitochondrial respiratory supercomplexes. The protein is Cytochrome c oxidase subunit 7A2-like, mitochondrial of Mus musculus (Mouse).